Here is a 266-residue protein sequence, read N- to C-terminus: Apolipoprotein A-I (266 aa).

The N-terminal stretch at 1-18 is a signal peptide; the sequence is MKAVVLTLAVLFLTGSQA. Repeat copies occupy residues 67–88 and 89–110. The 10 X approximate tandem repeats stretch occupies residues 67–266; it reads LKLLDNWDSL…DEAAKKLNAQ (200 aa). Methionine sulfoxide is present on Met109. The stretch at 111 to 121 is one 3; half-length repeat; sequence KDLEEVKQKVQ. Repeat copies occupy residues 122-142, 144-165, 166-187, 188-210, and 211-231. The 9; half-length repeat unit spans residues 232 to 242; sequence PALEDLRQGLL. The stretch at 243–266 is repeat 10; it reads PVLESFKVSLLAAVDEAAKKLNAQ.

It belongs to the apolipoprotein A1/A4/E family. In terms of assembly, homodimer. Interacts with APOA1BP and CLU. Component of a sperm activating protein complex (SPAP), consisting of APOA1, an immunoglobulin heavy chain, an immunoglobulin light chain and albumin. Interacts with NDRG1. Interacts with SCGB3A2. Interacts with NAXE and YJEFN3. Post-translationally, glycosylated. In terms of processing, palmitoylated. Phosphorylation sites are present in the extracellular medium. As to expression, major protein of plasma HDL, also found in chylomicrons.

The protein resides in the secreted. Functionally, participates in the reverse transport of cholesterol from tissues to the liver for excretion by promoting cholesterol efflux from tissues and by acting as a cofactor for the lecithin cholesterol acyltransferase (LCAT). As part of the SPAP complex, activates spermatozoa motility. In Ailuropoda melanoleuca (Giant panda), this protein is Apolipoprotein A-I (APOA1).